Consider the following 343-residue polypeptide: MRVADFSFDLPDELIARFPKQDRTSSRLLSLDGPSGVVEHKVFSDLLELVNENDLLVFNNTRVIPARMFGQKASGGKVEVLVERVLDEHRVLAHVRASKSLKPGNEVILEGKAKATMVARHDTLFELEFEHSQNVLDILNDIGHMPLPPYIDRPDNEADRERYQTVYGEKPGAVAAPTAGLHFDDKLMTALKNKGVQMAFVTLHVGAGTFQPVRVATVDEHIMHSEYIEVPDDVVAAVANTKANGGRVIAIGTTSVRSLESAAKVHGGKLDTYFGDTDIFIYPGYQFNVVDAMITNFHLPESTLIMLVSAFAGQNNIMGAYNTAIEQQYRFFSYGDAMFLTRK.

This sequence belongs to the QueA family. In terms of assembly, monomer.

The protein resides in the cytoplasm. The catalysed reaction is 7-aminomethyl-7-carbaguanosine(34) in tRNA + S-adenosyl-L-methionine = epoxyqueuosine(34) in tRNA + adenine + L-methionine + 2 H(+). The protein operates within tRNA modification; tRNA-queuosine biosynthesis. In terms of biological role, transfers and isomerizes the ribose moiety from AdoMet to the 7-aminomethyl group of 7-deazaguanine (preQ1-tRNA) to give epoxyqueuosine (oQ-tRNA). This is S-adenosylmethionine:tRNA ribosyltransferase-isomerase from Pseudoalteromonas translucida (strain TAC 125).